The following is a 471-amino-acid chain: Proline and serine-rich protein 2 (471 aa).

Disordered stretches follow at residues M1–M46 and C82–V247. Residues L26 to S43 are compositionally biased toward low complexity. S43 is modified (phosphoserine). T45 carries the post-translational modification Phosphothreonine. Positions S90–H101 are enriched in low complexity. Positions L154–S177 are enriched in pro residues. Phosphoserine occurs at positions 187, 220, and 223. Asymmetric dimethylarginine; alternate is present on R263. The residue at position 263 (R263) is an Omega-N-methylarginine; alternate. Disordered regions lie at residues D310 to P365 and P383 to G437. Residues S313–R324 are compositionally biased toward basic and acidic residues. 2 stretches are compositionally biased toward polar residues: residues A354 to Q364 and P383 to I393. Residues Y415–K427 are compositionally biased toward basic and acidic residues. Residue S431 is modified to Phosphoserine. R450 carries the omega-N-methylarginine modification.

In Mus musculus (Mouse), this protein is Proline and serine-rich protein 2 (Proser2).